Consider the following 632-residue polypeptide: Golgin subfamily A member 8O (632 aa).

A disordered region spans residues 1–76 (MAEETQHNKL…TSSATLKDLE (76 aa)). Positions 38-50 (TNGSIPETATSGG) are enriched in polar residues. Coiled coils occupy residues 85-150 (VLDS…TDLY) and 209-421 (ELEQ…SLMA). Disordered stretches follow at residues 423-452 (PGEGHGGEHLDSEGEEAPRPMPSVPEDPES), 505-524 (DAALGGGHHQAGAQGGDEGE), and 552-612 (NSAD…EHPG). A compositionally biased stretch (basic and acidic residues) spans 427 to 440 (HGGEHLDSEGEEAP). Residues 508 to 520 (LGGGHHQAGAQGG) are compositionally biased toward gly residues. Over residues 569–578 (AADKHGDLRE) the composition is skewed to basic and acidic residues.

This sequence belongs to the GOLGA6 family.

This Homo sapiens (Human) protein is Golgin subfamily A member 8O (GOLGA8O).